Consider the following 170-residue polypeptide: Small ribosomal subunit protein uS3mA (170 aa).

The N-terminal 30 residues, 1–30 (MAAPVMSALGRLQGLIRTERSLLTHVQSRC), are a transit peptide targeting the mitochondrion.

This sequence belongs to the universal ribosomal protein uS3 family. Component of the mitochondrial ribosome small subunit (28S) which comprises a 12S rRNA and about 30 distinct proteins.

The protein resides in the mitochondrion. This is Small ribosomal subunit protein uS3mA (mrps24-a) from Xenopus laevis (African clawed frog).